The sequence spans 937 residues: Leucine--tRNA ligase (937 aa).

The 'HIGH' region motif lies at 34–44; sequence PYPSGAMHIGH. The short motif at 609–613 is the 'KMSKS' region element; that stretch reads KMSSS.

The protein belongs to the class-I aminoacyl-tRNA synthetase family.

The protein localises to the cytoplasm. The catalysed reaction is tRNA(Leu) + L-leucine + ATP = L-leucyl-tRNA(Leu) + AMP + diphosphate. This chain is Leucine--tRNA ligase, found in Methanothermobacter thermautotrophicus (strain ATCC 29096 / DSM 1053 / JCM 10044 / NBRC 100330 / Delta H) (Methanobacterium thermoautotrophicum).